Consider the following 319-residue polypeptide: Lambda-crystallin homolog (319 aa).

Alanine 2 bears the N-acetylalanine mark. Serine 3 is modified (phosphoserine). Residues 16–17, aspartate 36, glutamate 97, and lysine 102 contribute to the NAD(+) site; that span reads VI. Serine 111 is modified (phosphoserine).

The protein belongs to the 3-hydroxyacyl-CoA dehydrogenase family. Homodimer. In terms of tissue distribution, widely expressed, with highest levels in liver and kidney.

The protein localises to the cytoplasm. It carries out the reaction L-gulonate + NAD(+) = 3-dehydro-L-gulonate + NADH + H(+). Its activity is regulated as follows. Inhibited by malonate. Functionally, has high L-gulonate 3-dehydrogenase activity. It also exhibits low dehydrogenase activity toward L-3-hydroxybutyrate (HBA) and L-threonate. The polypeptide is Lambda-crystallin homolog (CRYL1) (Homo sapiens (Human)).